Reading from the N-terminus, the 334-residue chain is Ribosomal RNA small subunit methyltransferase H (334 aa).

S-adenosyl-L-methionine-binding positions include 53–55 (GGH), Asp72, Phe99, Asp122, and His129.

It belongs to the methyltransferase superfamily. RsmH family.

The protein localises to the cytoplasm. It carries out the reaction cytidine(1402) in 16S rRNA + S-adenosyl-L-methionine = N(4)-methylcytidine(1402) in 16S rRNA + S-adenosyl-L-homocysteine + H(+). Functionally, specifically methylates the N4 position of cytidine in position 1402 (C1402) of 16S rRNA. The polypeptide is Ribosomal RNA small subunit methyltransferase H (Leptospira interrogans serogroup Icterohaemorrhagiae serovar copenhageni (strain Fiocruz L1-130)).